A 218-amino-acid chain; its full sequence is Cytochrome b6 (218 aa).

The chain crosses the membrane as a helical span at residues 35-55 (IFYCLGGITLVCFLIQFATGF). C38 serves as a coordination point for heme c. Heme b is bound by residues H89 and H103. A run of 3 helical transmembrane segments spans residues 93–113 (ASMM…TGGF), 119–139 (LTWV…VTGY), and 189–209 (LHTF…FLMI). Heme b-binding residues include H190 and H205.

This sequence belongs to the cytochrome b family. PetB subfamily. As to quaternary structure, the 4 large subunits of the cytochrome b6-f complex are cytochrome b6, subunit IV (17 kDa polypeptide, PetD), cytochrome f and the Rieske protein, while the 4 small subunits are PetG, PetL, PetM and PetN. The complex functions as a dimer. Heme b is required as a cofactor. The cofactor is heme c.

It is found in the cellular thylakoid membrane. Its function is as follows. Component of the cytochrome b6-f complex, which mediates electron transfer between photosystem II (PSII) and photosystem I (PSI), cyclic electron flow around PSI, and state transitions. The chain is Cytochrome b6 from Prochlorococcus marinus (strain MIT 9215).